The primary structure comprises 86 residues: Protein GOLVEN 1 (86 aa).

A signal peptide spans 1-29 (MSCSLRSGLVIVFCFILLLLSSNVGCASA). The propeptide occupies 30 to 70 (ARRLRSHKHHHHKVASLDVFNGGERRRALGGVETGEEVVVM). Position 72 is a sulfotyrosine (Tyr-72). Hydroxyproline is present on Pro-80. Residues 84 to 86 (EKS) constitute a propeptide that is removed on maturation.

The protein belongs to the RGF family. Binds to LRR receptor-like serine/threonine-protein kinases to trigger their dimerization with SERK proteins and subsequent signaling. Expressed in stems, hypocotyls, cotyledons, leaves, flowers, shoot apex, siliques, stamens and petals.

It localises to the endoplasmic reticulum. The protein resides in the secreted. Functionally, signaling peptide (root growth factor) that regulates the pattern of root growth and lateral root development by modulating the length and the number of cortical cells in the root apical meristem (RAM), and the anticlinal asymmetric cell divisions in lateral root initiation cells. Also involved in the regulation of hypocotyl bending and root gravitropism in a PIN2-traffic dependent manner, thus influencing the formation of auxin gradients. Maintains the postembryonic root stem cell niche. The chain is Protein GOLVEN 1 from Arabidopsis thaliana (Mouse-ear cress).